The following is a 483-amino-acid chain: Arginine/agmatine antiporter (483 aa).

12 helical membrane passes run 11–31 (ILGTLALTGIVISSMIGGGIF), 41–61 (ASAGAVMLAWMLSGIGIFFIA), 85–105 (GFGPYVGFTIAWGYWLCQIFG), 124–144 (YFAGGNTIPAILLGSLLIWIF), 157–177 (FVNIIGAVCTLIPLLLFILIT), 208–228 (STMLVTLWAFIGIEGAVVISG), 239–259 (ATILGFSGCLLIYVLLSLLPF), 289–309 (VLMNTGLLIAVLTSWLSWTIL), 336–356 (PSFSLFMTSGLMQITMLLVYF), 364–384 (MLEITGVMVLPAYLTSSLFLV), 415–435 (LWLIYAGGLQHLFMVAILLAL), and 458–478 (EILKMTIVALAALLAIFLFSA).

The protein belongs to the amino acid-polyamine-organocation (APC) superfamily. Basic amino acid/polyamine antiporter (APA) (TC 2.A.3.2) family.

The protein resides in the cell inner membrane. Its function is as follows. Catalyzes the exchange of L-arginine for agmatine. The arginine uptake by the bacterium in the macrophage may be a virulence factor against the host innate immune response. The polypeptide is Arginine/agmatine antiporter (aaxC) (Chlamydia trachomatis serovar A (strain ATCC VR-571B / DSM 19440 / HAR-13)).